The primary structure comprises 869 residues: Probable beta-glucosidase F (869 aa).

Residues 1 to 19 (MRVLSAIALVASLASSALS) form the signal peptide. Asn-77 and Asn-261 each carry an N-linked (GlcNAc...) asparagine glycan. Residue Asp-289 is part of the active site. N-linked (GlcNAc...) asparagine glycans are attached at residues Asn-332, Asn-364, Asn-399, and Asn-478. The tract at residues 677-697 (STYPPTRPPKGPTPTYPTAIP) is disordered. Pro residues predominate over residues 681 to 691 (PTRPPKGPTPT). Residue Asn-728 is glycosylated (N-linked (GlcNAc...) asparagine).

This sequence belongs to the glycosyl hydrolase 3 family.

Its subcellular location is the secreted. The enzyme catalyses Hydrolysis of terminal, non-reducing beta-D-glucosyl residues with release of beta-D-glucose.. It functions in the pathway glycan metabolism; cellulose degradation. Its function is as follows. Beta-glucosidases are one of a number of cellulolytic enzymes involved in the degradation of cellulosic biomass. Catalyzes the last step releasing glucose from the inhibitory cellobiose. This chain is Probable beta-glucosidase F (bglF), found in Aspergillus fumigatus (strain CBS 144.89 / FGSC A1163 / CEA10) (Neosartorya fumigata).